We begin with the raw amino-acid sequence, 689 residues long: Transcription termination factor Rho (689 aa).

Positions 1-20 (MPRTPKNQNLEQNTQTQSLT) are enriched in polar residues. 2 disordered regions span residues 1–90 (MPRT…KQPV) and 151–213 (AQAQ…NRNN). The span at 52–65 (PKRRGRKPNPKTKA) shows a compositional bias: basic residues. 2 stretches are compositionally biased toward low complexity: residues 170–183 (NAQQ…QNGE) and 191–213 (NNQN…NRNN). One can recognise a Rho RNA-BD domain in the interval 287 to 362 (IIYTEGVLEV…RRIDRVNFEE (76 aa)). ATP contacts are provided by residues 405–410 (GKGQRS), 417–422 (RTGKTV), and Arg-448.

This sequence belongs to the Rho family. As to quaternary structure, homohexamer. The homohexamer assembles into an open ring structure.

Its function is as follows. Facilitates transcription termination by a mechanism that involves Rho binding to the nascent RNA, activation of Rho's RNA-dependent ATPase activity, and release of the mRNA from the DNA template. The protein is Transcription termination factor Rho of Fibrobacter succinogenes (strain ATCC 19169 / S85).